A 185-amino-acid polypeptide reads, in one-letter code: Tetrahydromethanopterin S-methyltransferase subunit A 2 (185 aa).

At 1 to 21 (MVDKKVDKKPVPEDWPHIVGD) the chain is on the cytoplasmic side. Residues 22–38 (YVVGDAESPVAVVTLGS) traverse the membrane as a helical segment. The Extracellular portion of the chain corresponds to 39–185 (HMEDEPVRAG…LNKNKPDENT (147 aa)). H88 is a binding site for 5-hydroxybenzimidazolylcob(I)amide.

The protein belongs to the MtrA family. In terms of assembly, the complex is composed of 8 subunits; MtrA, MtrB, MtrC, MtrD, MtrE, MtrF, MtrG and MtrH. 5-hydroxybenzimidazolylcob(I)amide is required as a cofactor.

The protein resides in the cell membrane. The catalysed reaction is 5-methyl-5,6,7,8-tetrahydromethanopterin + coenzyme M + 2 Na(+)(in) = 5,6,7,8-tetrahydromethanopterin + methyl-coenzyme M + 2 Na(+)(out). The protein operates within one-carbon metabolism; methanogenesis from CO(2); methyl-coenzyme M from 5,10-methylene-5,6,7,8-tetrahydromethanopterin: step 2/2. Its function is as follows. Part of a complex that catalyzes the formation of methyl-coenzyme M and tetrahydromethanopterin from coenzyme M and methyl-tetrahydromethanopterin. This is an energy-conserving, sodium-ion translocating step. The protein is Tetrahydromethanopterin S-methyltransferase subunit A 2 of Methanothermobacter marburgensis (strain ATCC BAA-927 / DSM 2133 / JCM 14651 / NBRC 100331 / OCM 82 / Marburg) (Methanobacterium thermoautotrophicum).